A 134-amino-acid polypeptide reads, in one-letter code: Glycine cleavage system H protein (134 aa).

Residues 24–106 (TVRVGITDYA…YGAGWLLDIQ (83 aa)) form the Lipoyl-binding domain. Position 65 is an N6-lipoyllysine (K65).

It belongs to the GcvH family. The glycine cleavage system is composed of four proteins: P, T, L and H. (R)-lipoate serves as cofactor.

Functionally, the glycine cleavage system catalyzes the degradation of glycine. The H protein shuttles the methylamine group of glycine from the P protein to the T protein. The polypeptide is Glycine cleavage system H protein (Mycobacterium tuberculosis (strain ATCC 25177 / H37Ra)).